The sequence spans 299 residues: GTPase Era (299 aa).

The 168-residue stretch at 5–172 (KSGFVSIIGR…IDVLKTYLPE (168 aa)) folds into the Era-type G domain. The G1 stretch occupies residues 13–20 (GRPNVGKS). Position 13-20 (13-20 (GRPNVGKS)) interacts with GTP. The G2 stretch occupies residues 39–43 (QTTRN). The interval 60–63 (DTPG) is G3. GTP contacts are provided by residues 60 to 64 (DTPGI) and 122 to 125 (NKID). Residues 122–125 (NKID) form a G4 region. The G5 stretch occupies residues 151 to 153 (ISA). One can recognise a KH type-2 domain in the interval 203-280 (TSEEIPHAIG…YLELWVKVQK (78 aa)).

The protein belongs to the TRAFAC class TrmE-Era-EngA-EngB-Septin-like GTPase superfamily. Era GTPase family. Monomer.

The protein resides in the cytoplasm. The protein localises to the cell membrane. Its function is as follows. An essential GTPase that binds both GDP and GTP, with rapid nucleotide exchange. Plays a role in 16S rRNA processing and 30S ribosomal subunit biogenesis and possibly also in cell cycle regulation and energy metabolism. This is GTPase Era from Staphylococcus haemolyticus (strain JCSC1435).